We begin with the raw amino-acid sequence, 78 residues long: MASNRELIEMEGVVVESLPNAMFQVELENGFQVLAHISGKIRRNSIKILLGDRVTVELTPYDLTKGRIIYRLRKDRTQ.

An S1-like domain is found at 1 to 73 (MASNRELIEM…TKGRIIYRLR (73 aa)).

It belongs to the IF-1 family. Component of the 30S ribosomal translation pre-initiation complex which assembles on the 30S ribosome in the order IF-2 and IF-3, IF-1 and N-formylmethionyl-tRNA(fMet); mRNA recruitment can occur at any time during PIC assembly.

The protein localises to the plastid. It is found in the chloroplast. Functionally, one of the essential components for the initiation of protein synthesis. Stabilizes the binding of IF-2 and IF-3 on the 30S subunit to which N-formylmethionyl-tRNA(fMet) subsequently binds. Helps modulate mRNA selection, yielding the 30S pre-initiation complex (PIC). Upon addition of the 50S ribosomal subunit IF-1, IF-2 and IF-3 are released leaving the mature 70S translation initiation complex. The sequence is that of Translation initiation factor IF-1, chloroplastic from Ostreococcus tauri.